A 225-amino-acid polypeptide reads, in one-letter code: ATP-dependent Clp protease proteolytic subunit (225 aa).

The Nucleophile role is filled by serine 123. Histidine 148 is an active-site residue.

This sequence belongs to the peptidase S14 family. Fourteen ClpP subunits assemble into 2 heptameric rings which stack back to back to give a disk-like structure with a central cavity, resembling the structure of eukaryotic proteasomes.

The protein localises to the cytoplasm. It catalyses the reaction Hydrolysis of proteins to small peptides in the presence of ATP and magnesium. alpha-casein is the usual test substrate. In the absence of ATP, only oligopeptides shorter than five residues are hydrolyzed (such as succinyl-Leu-Tyr-|-NHMec, and Leu-Tyr-Leu-|-Tyr-Trp, in which cleavage of the -Tyr-|-Leu- and -Tyr-|-Trp bonds also occurs).. Cleaves peptides in various proteins in a process that requires ATP hydrolysis. Has a chymotrypsin-like activity. Plays a major role in the degradation of misfolded proteins. In Chlorobium phaeovibrioides (strain DSM 265 / 1930) (Prosthecochloris vibrioformis (strain DSM 265)), this protein is ATP-dependent Clp protease proteolytic subunit.